Reading from the N-terminus, the 109-residue chain is Large ribosomal subunit protein uL24 (109 aa).

Belongs to the universal ribosomal protein uL24 family. In terms of assembly, part of the 50S ribosomal subunit.

Its function is as follows. One of two assembly initiator proteins, it binds directly to the 5'-end of the 23S rRNA, where it nucleates assembly of the 50S subunit. One of the proteins that surrounds the polypeptide exit tunnel on the outside of the subunit. The polypeptide is Large ribosomal subunit protein uL24 (Syntrophotalea carbinolica (strain DSM 2380 / NBRC 103641 / GraBd1) (Pelobacter carbinolicus)).